The following is a 194-amino-acid chain: Imidazoleglycerol-phosphate dehydratase (194 aa).

It belongs to the imidazoleglycerol-phosphate dehydratase family.

Its subcellular location is the cytoplasm. It carries out the reaction D-erythro-1-(imidazol-4-yl)glycerol 3-phosphate = 3-(imidazol-4-yl)-2-oxopropyl phosphate + H2O. The protein operates within amino-acid biosynthesis; L-histidine biosynthesis; L-histidine from 5-phospho-alpha-D-ribose 1-diphosphate: step 6/9. The protein is Imidazoleglycerol-phosphate dehydratase of Caldanaerobacter subterraneus subsp. tengcongensis (strain DSM 15242 / JCM 11007 / NBRC 100824 / MB4) (Thermoanaerobacter tengcongensis).